We begin with the raw amino-acid sequence, 195 residues long: Ureidoglycolate lyase (195 aa).

The protein belongs to the ureidoglycolate lyase family. Homodimer.

The catalysed reaction is (S)-ureidoglycolate = urea + glyoxylate. It functions in the pathway nitrogen metabolism; (S)-allantoin degradation. Functionally, catalyzes the catabolism of the allantoin degradation intermediate (S)-ureidoglycolate, generating urea and glyoxylate. Involved in the utilization of allantoin as secondary nitrogen source when primary sources are limiting. The polypeptide is Ureidoglycolate lyase (DAL3) (Saccharomyces cerevisiae (strain ATCC 204508 / S288c) (Baker's yeast)).